The following is a 484-amino-acid chain: tRNA sulfurtransferase (484 aa).

One can recognise a THUMP domain in the interval 63 to 167; that stretch reads QGIRDRLSCM…DQRLFVVHDQ (105 aa). Residues 185-186, K267, G289, and Q298 contribute to the ATP site; that span reads LM. C346 and C457 are oxidised to a cystine. The 79-residue stretch at 405-483 folds into the Rhodanese domain; the sequence is ALAGQVIIDI…GHANVRVYRP (79 aa). The active-site Cysteine persulfide intermediate is C457.

It belongs to the ThiI family.

Its subcellular location is the cytoplasm. The enzyme catalyses [ThiI sulfur-carrier protein]-S-sulfanyl-L-cysteine + a uridine in tRNA + 2 reduced [2Fe-2S]-[ferredoxin] + ATP + H(+) = [ThiI sulfur-carrier protein]-L-cysteine + a 4-thiouridine in tRNA + 2 oxidized [2Fe-2S]-[ferredoxin] + AMP + diphosphate. It catalyses the reaction [ThiS sulfur-carrier protein]-C-terminal Gly-Gly-AMP + S-sulfanyl-L-cysteinyl-[cysteine desulfurase] + AH2 = [ThiS sulfur-carrier protein]-C-terminal-Gly-aminoethanethioate + L-cysteinyl-[cysteine desulfurase] + A + AMP + 2 H(+). Its pathway is cofactor biosynthesis; thiamine diphosphate biosynthesis. Functionally, catalyzes the ATP-dependent transfer of a sulfur to tRNA to produce 4-thiouridine in position 8 of tRNAs, which functions as a near-UV photosensor. Also catalyzes the transfer of sulfur to the sulfur carrier protein ThiS, forming ThiS-thiocarboxylate. This is a step in the synthesis of thiazole, in the thiamine biosynthesis pathway. The sulfur is donated as persulfide by IscS. The chain is tRNA sulfurtransferase from Pseudomonas syringae pv. tomato (strain ATCC BAA-871 / DC3000).